The following is a 232-amino-acid chain: Adenosylcobinamide-GDP ribazoletransferase (232 aa).

7 helical membrane-spanning segments follow: residues 24–44 (LWAF…ILYL), 46–66 (IPLA…LLHL), 96–116 (IAGV…LSML), 117–137 (PFYA…LGLA), 153–173 (GMNG…YLPV), 174–194 (VIYD…WYVI), and 210–230 (GAMA…SLCF).

This sequence belongs to the CobS family. The cofactor is Mg(2+).

It localises to the cell membrane. It catalyses the reaction alpha-ribazole + adenosylcob(III)inamide-GDP = adenosylcob(III)alamin + GMP + H(+). It carries out the reaction alpha-ribazole 5'-phosphate + adenosylcob(III)inamide-GDP = adenosylcob(III)alamin 5'-phosphate + GMP + H(+). It functions in the pathway cofactor biosynthesis; adenosylcobalamin biosynthesis; adenosylcobalamin from cob(II)yrinate a,c-diamide: step 7/7. Its function is as follows. Joins adenosylcobinamide-GDP and alpha-ribazole to generate adenosylcobalamin (Ado-cobalamin). Also synthesizes adenosylcobalamin 5'-phosphate from adenosylcobinamide-GDP and alpha-ribazole 5'-phosphate. The chain is Adenosylcobinamide-GDP ribazoletransferase from Pyrococcus abyssi (strain GE5 / Orsay).